The following is a 557-amino-acid chain: UvrABC system protein C (557 aa).

Residues 14 to 89 (EEPGVYIFKN…IKKYRPKYNV (76 aa)) form the GIY-YIG domain. Positions 194–229 (EEVFDYLKEKMETHSKMLDFENAAKYRDLLLNLSNV) constitute a UVR domain.

This sequence belongs to the UvrC family. In terms of assembly, interacts with UvrB in an incision complex.

Its subcellular location is the cytoplasm. In terms of biological role, the UvrABC repair system catalyzes the recognition and processing of DNA lesions. UvrC both incises the 5' and 3' sides of the lesion. The N-terminal half is responsible for the 3' incision and the C-terminal half is responsible for the 5' incision. The polypeptide is UvrABC system protein C (Thermotoga sp. (strain RQ2)).